The following is a 110-amino-acid chain: Large ribosomal subunit protein uL22 (110 aa).

This sequence belongs to the universal ribosomal protein uL22 family. As to quaternary structure, part of the 50S ribosomal subunit.

Functionally, this protein binds specifically to 23S rRNA; its binding is stimulated by other ribosomal proteins, e.g. L4, L17, and L20. It is important during the early stages of 50S assembly. It makes multiple contacts with different domains of the 23S rRNA in the assembled 50S subunit and ribosome. In terms of biological role, the globular domain of the protein is located near the polypeptide exit tunnel on the outside of the subunit, while an extended beta-hairpin is found that lines the wall of the exit tunnel in the center of the 70S ribosome. In Oleidesulfovibrio alaskensis (strain ATCC BAA-1058 / DSM 17464 / G20) (Desulfovibrio alaskensis), this protein is Large ribosomal subunit protein uL22.